The following is a 400-amino-acid chain: tRNA(Ile)-lysidine synthase (400 aa).

ATP is bound at residue 20 to 25 (SGGLDS).

The protein belongs to the tRNA(Ile)-lysidine synthase family.

It is found in the cytoplasm. The catalysed reaction is cytidine(34) in tRNA(Ile2) + L-lysine + ATP = lysidine(34) in tRNA(Ile2) + AMP + diphosphate + H(+). In terms of biological role, ligates lysine onto the cytidine present at position 34 of the AUA codon-specific tRNA(Ile) that contains the anticodon CAU, in an ATP-dependent manner. Cytidine is converted to lysidine, thus changing the amino acid specificity of the tRNA from methionine to isoleucine. The chain is tRNA(Ile)-lysidine synthase from Wigglesworthia glossinidia brevipalpis.